We begin with the raw amino-acid sequence, 711 residues long: DNA topoisomerase 3 (711 aa).

Residues 2–135 enclose the Toprim domain; it reads KSLILAEKPS…IKRLWISSVT (134 aa). The Mg(2+) site is built by Glu8 and Asp104. The Topo IA-type catalytic domain maps to 152–580; that stretch reads FQHLYEAALA…EMKAFTQSIV (429 aa). An interaction with DNA region spans residues 186 to 191; sequence SLGRVQ. Residue Tyr305 is the O-(5'-phospho-DNA)-tyrosine intermediate of the active site. A disordered region spans residues 672 to 699; sequence KRFKNKSSGKVSKKEMKKYMNNEDSLEN. The segment covering 683–692 has biased composition (basic and acidic residues); it reads SKKEMKKYMN.

It belongs to the type IA topoisomerase family. Requires Mg(2+) as cofactor.

The catalysed reaction is ATP-independent breakage of single-stranded DNA, followed by passage and rejoining.. In terms of biological role, releases the supercoiling and torsional tension of DNA, which is introduced during the DNA replication and transcription, by transiently cleaving and rejoining one strand of the DNA duplex. Introduces a single-strand break via transesterification at a target site in duplex DNA. The scissile phosphodiester is attacked by the catalytic tyrosine of the enzyme, resulting in the formation of a DNA-(5'-phosphotyrosyl)-enzyme intermediate and the expulsion of a 3'-OH DNA strand. The free DNA strand then undergoes passage around the unbroken strand, thus removing DNA supercoils. Finally, in the religation step, the DNA 3'-OH attacks the covalent intermediate to expel the active-site tyrosine and restore the DNA phosphodiester backbone. This Staphylococcus haemolyticus (strain JCSC1435) protein is DNA topoisomerase 3.